Here is a 156-residue protein sequence, read N- to C-terminus: MQLYTYFFTFSLVLILALADQENKSLDFTQEGGIAKRGAFQFSYLIKKYTGRNPLDYWGYGCWCGLGGKGTPVDGVDWCCYHHDMCFNSITQGPRPTCSKNAPYHKNYYFSGLKCSTGWLTSKCGRAICACDIAAVKCFMRNHFNNKYQNYKKNIC.

An N-terminal signal peptide occupies residues 1–19; sequence MQLYTYFFTFSLVLILALA. Positions 20–35 are excised as a propeptide; that stretch reads DQENKSLDFTQEGGIA. 5 disulfides stabilise this stretch: cysteine 62/cysteine 156, cysteine 64/cysteine 80, cysteine 79/cysteine 138, cysteine 86/cysteine 131, and cysteine 115/cysteine 129. Ca(2+) contacts are provided by glycine 65 and glycine 67. The active site involves histidine 83. Aspartate 84 is a Ca(2+) binding site. Aspartate 132 is a catalytic residue.

Belongs to the phospholipase A2 family. It depends on Ca(2+) as a cofactor.

Its subcellular location is the secreted. It is found in the nematocyst. It catalyses the reaction a 1,2-diacyl-sn-glycero-3-phosphocholine + H2O = a 1-acyl-sn-glycero-3-phosphocholine + a fatty acid + H(+). Its function is as follows. Sea anemone phospholipase A2 (PLA2) that may have a role both in defense and in digestion, since its expression and enzymatic activity were found both in the acontia (defensive organs) and tentacles. PLA2 catalyzes the calcium-dependent hydrolysis of the 2-acyl groups in 3-sn-phosphoglycerides. The chain is Phospholipase A2 A2-hormotoxin-Apt1a from Adamsia palliata (Cloak anemone).